The following is a 277-amino-acid chain: Carbonyl reductase [NADPH] 1 (277 aa).

An N-acetylserine modification is found at Ser-2. Residues Ser-2 and Ser-30 each carry the phosphoserine modification. NADP(+) contacts are provided by residues 10-34, 63-64, and Asn-90; these read VTGA…GDVV and DI. Glutathione-binding positions include 95 to 97 and Gln-106; that span reads FKT. Ser-140 contacts substrate. A glutathione-binding site is contributed by 193 to 194; the sequence is AY. Tyr-194 (proton acceptor) is an active-site residue. Residues 194–198 and 231–233 contribute to the NADP(+) site; these read YGVTK and VRT. Lys-239 is subject to N6-1-carboxyethyl lysine.

Belongs to the short-chain dehydrogenases/reductases (SDR) family. Monomer.

It localises to the cytoplasm. It carries out the reaction a secondary alcohol + NADP(+) = a ketone + NADPH + H(+). The catalysed reaction is prostaglandin F2alpha + NADP(+) = prostaglandin E2 + NADPH + H(+). The enzyme catalyses prostaglandin E1 + NADP(+) = 15-oxoprostaglandin E1 + NADPH + H(+). It catalyses the reaction menadione + NADPH + H(+) = menadiol + NADP(+). It carries out the reaction prostaglandin D2 + NADP(+) = 15-oxoprostaglandin D2 + NADPH + H(+). The catalysed reaction is prostaglandin E2 + NADP(+) = 15-oxoprostaglandin E2 + NADPH + H(+). The enzyme catalyses prostaglandin F2alpha + NADP(+) = 15-oxoprostaglandin F2alpha + NADPH + H(+). It catalyses the reaction daunorubicin + NADPH + H(+) = 13-dihydrodaunorubicin + NADP(+). It carries out the reaction S-nitrosoglutathione + NADPH + H(+) = S-(hydroxysulfenamide)glutathione + NADP(+). The catalysed reaction is a primary alcohol + NADP(+) = an aldehyde + NADPH + H(+). The enzyme catalyses cortisol + NADPH + H(+) = 20beta-dihydrocortisol + NADP(+). It catalyses the reaction corticosterone + NADPH + H(+) = 20beta-dihydrocorticosterone + NADP(+). Its function is as follows. NADPH-dependent reductase with broad substrate specificity. Catalyzes the reduction of a wide variety of carbonyl compounds including quinones, prostaglandins, menadione, plus various xenobiotics. Catalyzes the reduction of the antitumor anthracyclines doxorubicin and daunorubicin to the cardiotoxic compounds doxorubicinol and daunorubicinol. Can convert prostaglandin E to prostaglandin F2-alpha. Can bind glutathione, which explains its higher affinity for glutathione-conjugated substrates. Catalyzes the reduction of S-nitrosoglutathione. In addition, participates in the glucocorticoid metabolism by catalyzing the NADPH-dependent cortisol/corticosterone into 20beta-dihydrocortisol (20b-DHF) or 20beta-corticosterone (20b-DHB), which are weak agonists of NR3C1 and NR3C2 in adipose tissue. The sequence is that of Carbonyl reductase [NADPH] 1 from Bos taurus (Bovine).